A 387-amino-acid polypeptide reads, in one-letter code: Methyltransferase phomM' (387 aa).

Residues 98–223 (PHRPKDLHIL…QSVADLFTTL (126 aa)) form a methyltransferase domain region.

This sequence belongs to the class I-like SAM-binding methyltransferase superfamily. Erg6/SMT family.

The protein operates within mycotoxin biosynthesis. Its function is as follows. Methyltransferase; part of the gene cluster that mediates the biosynthesis of the phomopsins, a group of hexapeptide mycotoxins which infects lupins and causes lupinosis disease in livestock. Within the pathway, phomM' acts as an S-adenosylmethionine-dependent alpha-N-methyltransferase that catalyzes two successive N-methylation reactions, converting N-desmethyl-phomopsin A to phomopsin A and phomopsin A further to an N,N-dimethylated congener called phomopsin E. The pathway starts with the processing of the precursor phomA' by several endopeptidases including kexin proteases as well as the cluster-specific S41 family peptidase phomP1 and the oligopeptidase phomG' to produce 10 identical copies of the hexapeptide Tyr-Val-Ile-Pro-Ile-Asp. After being excised from the precursor peptide, the core peptides are cyclized and modified post-translationally by enzymes encoded within the gene cluster. The timing and order of proteolysis of the phomA' precursor and PTMs are still unknown. Two tyrosinase-like enzymes, phomQ1' and phomQ2, catalyze the chlorination and hydroxylation of Tyr, respectively. PhomYb, is proposed to be involved in the construction of the macrocyclic structure. The other 4 ustYa family proteins may be involved in PTMs that generate the unique structure of phomopsin A. PhomYa' is required for the hydroxylation of C-beta of Tyr. PhomYc', phomYd', and phomYe are responsible for the biosynthesis of 2,3-dehydroisoleucine (dIle), 2,3-dehydroaspartic acid (dAsp), and 3,4-dehydroproline (dPro), respectively. While dIle formation by phomYc' is indispensable for the installation of dAsp by phomYd', the order of the other PTMs have not been elucidated yet. Most of the biosynthetic enzymes likely have broad substrate specificity, and thus, there might be a metabolic grid from a precursor to phomopsin A. The enzyme(s) responsible for the biosynthesis of 3,4-dehydrovaline (dVal) have also not been identified yet. Finally, phomM' acts as an S-adenosylmethionine-dependent alpha-N-methyltransferase that catalyzes two successive N-methylation reactions, converting N-desmethyl-phomopsin A to phomopsin A and phomopsin A further to an N,N-dimethylated congener called phomopsin E. This is Methyltransferase phomM' from Diaporthe leptostromiformis (Lupinosis disease fungus).